A 116-amino-acid polypeptide reads, in one-letter code: Peptidyl-tRNA hydrolase (116 aa).

The protein belongs to the PTH2 family.

It is found in the cytoplasm. It carries out the reaction an N-acyl-L-alpha-aminoacyl-tRNA + H2O = an N-acyl-L-amino acid + a tRNA + H(+). Its function is as follows. The natural substrate for this enzyme may be peptidyl-tRNAs which drop off the ribosome during protein synthesis. This chain is Peptidyl-tRNA hydrolase, found in Methanococcus maripaludis (strain C6 / ATCC BAA-1332).